Reading from the N-terminus, the 260-residue chain is Sphinganine C4-monooxygenase 1 (260 aa).

Helical transmembrane passes span 11-31, 55-75, and 92-112; these read LLGT…YVAL, SVVK…ILLF, and FLVL…WQYF. The Fatty acid hydroxylase domain occupies 99–235; it reads FVTAMIVLDT…FVMWDRILGT (137 aa). Residues 114-118 carry the Histidine box-1 motif; the sequence is HRYMH. The Histidine box-2 motif lies at 128–132; sequence HSQHH. The short motif at 207-213 is the Histidine box-3 element; the sequence is YHDIHHQ.

It belongs to the sterol desaturase family. Requires Fe cation as cofactor. Ubiquitous, with higher levels in flowers and roots.

The protein localises to the endoplasmic reticulum membrane. The catalysed reaction is a dihydroceramide + 2 Fe(II)-[cytochrome b5] + O2 + 2 H(+) = a phytoceramide + 2 Fe(III)-[cytochrome b5] + H2O. It participates in membrane lipid metabolism; sphingolipid biosynthesis. In terms of biological role, involved in sphingolipid trihydroxy long-chain base (4-hydroxysphinganine) biosynthesis. Can use C18- and C20-sphinganine as substrates to produce C18- and C20-phytosphinganines (D-ribo-2-amino-1,3,4-trihydroxyoctadecane and -eicosane). This is Sphinganine C4-monooxygenase 1 (SBH1) from Arabidopsis thaliana (Mouse-ear cress).